The chain runs to 305 residues: Methionyl-tRNA formyltransferase (305 aa).

108–111 (SLLP) is a (6S)-5,6,7,8-tetrahydrofolate binding site.

The protein belongs to the Fmt family.

It catalyses the reaction L-methionyl-tRNA(fMet) + (6R)-10-formyltetrahydrofolate = N-formyl-L-methionyl-tRNA(fMet) + (6S)-5,6,7,8-tetrahydrofolate + H(+). Functionally, attaches a formyl group to the free amino group of methionyl-tRNA(fMet). The formyl group appears to play a dual role in the initiator identity of N-formylmethionyl-tRNA by promoting its recognition by IF2 and preventing the misappropriation of this tRNA by the elongation apparatus. This Clavibacter michiganensis subsp. michiganensis (strain NCPPB 382) protein is Methionyl-tRNA formyltransferase.